Here is a 526-residue protein sequence, read N- to C-terminus: Bifunctional purine biosynthesis protein PurH (526 aa).

The region spanning Met-1–Ile-145 is the MGS-like domain.

The protein belongs to the PurH family.

The catalysed reaction is (6R)-10-formyltetrahydrofolate + 5-amino-1-(5-phospho-beta-D-ribosyl)imidazole-4-carboxamide = 5-formamido-1-(5-phospho-D-ribosyl)imidazole-4-carboxamide + (6S)-5,6,7,8-tetrahydrofolate. It carries out the reaction IMP + H2O = 5-formamido-1-(5-phospho-D-ribosyl)imidazole-4-carboxamide. It functions in the pathway purine metabolism; IMP biosynthesis via de novo pathway; 5-formamido-1-(5-phospho-D-ribosyl)imidazole-4-carboxamide from 5-amino-1-(5-phospho-D-ribosyl)imidazole-4-carboxamide (10-formyl THF route): step 1/1. It participates in purine metabolism; IMP biosynthesis via de novo pathway; IMP from 5-formamido-1-(5-phospho-D-ribosyl)imidazole-4-carboxamide: step 1/1. This chain is Bifunctional purine biosynthesis protein PurH, found in Polynucleobacter asymbioticus (strain DSM 18221 / CIP 109841 / QLW-P1DMWA-1) (Polynucleobacter necessarius subsp. asymbioticus).